Here is a 308-residue protein sequence, read N- to C-terminus: Putative protein TIC 214 N-terminal part (308 aa).

6 consecutive transmembrane segments (helical) span residues 18-38 (IINS…FSIG), 64-84 (FITG…HLAL), 87-107 (PHTI…WNNH), 124-144 (LSIQ…HFIL), 172-192 (VGWL…LSWI), and 215-235 (IFSI…PSPI). Positions 239-249 (KLKETSEMEER) are enriched in basic and acidic residues. A disordered region spans residues 239–308 (KLKETSEMEE…RDPSEWKGNI (70 aa)). Over residues 250–262 (GESEEETDVEIET) the composition is skewed to acidic residues. A compositionally biased stretch (basic and acidic residues) spans 264-273 (SETKETKQEQ). The segment covering 275–293 (GSTEEDPSLCSEEQEDPDK) has biased composition (acidic residues). A compositionally biased stretch (basic and acidic residues) spans 294–308 (LDETGRDPSEWKGNI).

It belongs to the TIC214 family. As to quaternary structure, part of the Tic complex.

The protein resides in the plastid. It is found in the chloroplast inner membrane. Involved in protein precursor import into chloroplasts. May be part of an intermediate translocation complex acting as a protein-conducting channel at the inner envelope. In Piper cenocladum (Ant piper), this protein is Putative protein TIC 214 N-terminal part.